The following is a 461-amino-acid chain: Sensor histidine kinase MctS (461 aa).

2 helical membrane passes run 7-27 (IIALAIVPLVISILAITTFIT) and 203-223 (FVIVALIDVPSVLVVFTTCML). At His-259 the chain carries Phosphohistidine; by autocatalysis. Residues 360 to 450 (LYRVAQEAFN…TLTAMMPKSA (91 aa)) enclose the Histidine kinase domain.

Its subcellular location is the cell membrane. It catalyses the reaction ATP + protein L-histidine = ADP + protein N-phospho-L-histidine.. Its function is as follows. Member of the two-component regulatory system MctS/MctR, which activates mctP expression. This chain is Sensor histidine kinase MctS, found in Rhizobium johnstonii (strain DSM 114642 / LMG 32736 / 3841) (Rhizobium leguminosarum bv. viciae).